We begin with the raw amino-acid sequence, 339 residues long: MSTAVINADDDAMEPTLQSILDQRSLRWIFVGGKGGVGKTTTSCSLAIQLAKVRRSVLLISTDPAHNLSDAFSQKFGKDARKVDGFENLFAMEIDPNGSMQDLLAGQAEGEGAEGLGGMGGMMQDLALSIPGIDEAMSFAEVLKQVKSLSYETIIFDTAPTGHTLRFLQFPSVLEKALKKISQLSSQFGGVLNGLLGANGALPNGQNLGEMMEKLEALRATISEVNQQFKDERLTTFVCVCIPEFLSLYETERMIQELASYQIDTHCIVVNQLLFPKPGSDCEQCTARRRMQKKYLDQIEELYDEFNVVKMPLLVEEVRGKEKLEKFSEMLVKPFVPPS.

34 to 41 (KGGVGKTT) serves as a coordination point for ATP. The active site involves Asp-63. Glu-244 and Asn-271 together coordinate ATP. 2 residues coordinate Zn(2+): Cys-282 and Cys-285.

It belongs to the arsA ATPase family. In terms of assembly, homodimer.

It is found in the cytoplasm. The protein localises to the endoplasmic reticulum. In terms of biological role, ATPase required for the post-translational delivery of tail-anchored (TA) proteins to the endoplasmic reticulum. Recognizes and selectively binds the transmembrane domain of TA proteins in the cytosol. This complex then targets to the endoplasmic reticulum by membrane-bound receptors, where the tail-anchored protein is released for insertion. This process is regulated by ATP binding and hydrolysis. ATP binding drives the homodimer towards the closed dimer state, facilitating recognition of newly synthesized TA membrane proteins. ATP hydrolysis is required for insertion. Subsequently, the homodimer reverts towards the open dimer state, lowering its affinity for the membrane-bound receptor, and returning it to the cytosol to initiate a new round of targeting. In Podospora anserina (strain S / ATCC MYA-4624 / DSM 980 / FGSC 10383) (Pleurage anserina), this protein is ATPase GET3.